The following is a 105-amino-acid chain: Phosphoribosyl-AMP cyclohydrolase (105 aa).

Mg(2+) is bound at residue Asp72. Cys73 lines the Zn(2+) pocket. Residues Asp74 and Asp76 each contribute to the Mg(2+) site. Positions 89 and 96 each coordinate Zn(2+).

Belongs to the PRA-CH family. As to quaternary structure, homodimer. Mg(2+) serves as cofactor. The cofactor is Zn(2+).

The protein resides in the cytoplasm. The catalysed reaction is 1-(5-phospho-beta-D-ribosyl)-5'-AMP + H2O = 1-(5-phospho-beta-D-ribosyl)-5-[(5-phospho-beta-D-ribosylamino)methylideneamino]imidazole-4-carboxamide. It functions in the pathway amino-acid biosynthesis; L-histidine biosynthesis; L-histidine from 5-phospho-alpha-D-ribose 1-diphosphate: step 3/9. Functionally, catalyzes the hydrolysis of the adenine ring of phosphoribosyl-AMP. In Listeria innocua serovar 6a (strain ATCC BAA-680 / CLIP 11262), this protein is Phosphoribosyl-AMP cyclohydrolase.